A 374-amino-acid polypeptide reads, in one-letter code: Phosphate-binding protein PstS1 (374 aa).

Residues Met-1–Gly-23 form the signal peptide. Cys-24 carries N-palmitoyl cysteine lipidation. Cys-24 is lipidated: S-diacylglycerol cysteine. Positions Gly-25–Ser-48 are disordered. Residues Ser-58–Leu-60, Ser-88, Asp-106, and Ser-189–Asp-191 each bind phosphate.

Belongs to the PstS family. As to quaternary structure, the complex is composed of two ATP-binding proteins (PstB), two transmembrane proteins (PstC and PstA) and a solute-binding protein (PstS).

The protein resides in the cell membrane. The protein localises to the secreted. Functions in inorganic phosphate uptake, a phosphate-binding protein, although probably not the main uptake protein under phosphate starvation. Part of the ABC transporter complex PstSACB involved in phosphate import. Its function is as follows. A host TLR2 agonist (toll-like receptor), requires both host TLR1 and TLR2 as coreceptors. This Mycobacterium bovis (strain BCG / Pasteur 1173P2) protein is Phosphate-binding protein PstS1 (pstS1).